The following is a 233-amino-acid chain: Ubiquitin carboxyl-terminal hydrolase isozyme L4 (233 aa).

One can recognise a UCH catalytic domain in the interval 5–232 (RWLPLEANPE…LRFNAIALSA (228 aa)). The interaction with ubiquitin stretch occupies residues 8-13 (PLEANP). Cysteine 95 acts as the Nucleophile in catalysis. Residue serine 133 is modified to Phosphoserine. Histidine 172 acts as the Proton donor in catalysis. The tract at residues 222-227 (ELRFNA) is interaction with ubiquitin.

It belongs to the peptidase C12 family. Expressed in various tissues at low level.

It localises to the cytoplasm. It carries out the reaction Thiol-dependent hydrolysis of ester, thioester, amide, peptide and isopeptide bonds formed by the C-terminal Gly of ubiquitin (a 76-residue protein attached to proteins as an intracellular targeting signal).. Its function is as follows. Ubiquitin-protein hydrolase is involved both in the processing of ubiquitin precursors and of ubiquitinated proteins. This enzyme is a thiol protease that recognizes and hydrolyzes a peptide bond at the C-terminal glycine of ubiquitin. The protein is Ubiquitin carboxyl-terminal hydrolase isozyme L4 (Uchl4) of Mus musculus (Mouse).